Reading from the N-terminus, the 260-residue chain is Flap endonuclease Xni (260 aa).

Mg(2+) is bound at residue Asp-109. Residues 165-259 form the 5'-3' exonuclease domain; that stretch reads VKPSQLADYW…DIRFTGPNKA (95 aa). K(+) contacts are provided by Leu-176, Pro-185, Val-187, and Val-190. An interaction with DNA region spans residues 189–194; that stretch reads GVGPKA.

Belongs to the Xni family. Requires Mg(2+) as cofactor. K(+) is required as a cofactor.

In terms of biological role, has flap endonuclease activity. During DNA replication, flap endonucleases cleave the 5'-overhanging flap structure that is generated by displacement synthesis when DNA polymerase encounters the 5'-end of a downstream Okazaki fragment. This chain is Flap endonuclease Xni, found in Vibrio campbellii (strain ATCC BAA-1116).